A 151-amino-acid polypeptide reads, in one-letter code: Transcription antitermination protein NusB (151 aa).

It belongs to the NusB family.

Functionally, involved in transcription antitermination. Required for transcription of ribosomal RNA (rRNA) genes. Binds specifically to the boxA antiterminator sequence of the ribosomal RNA (rrn) operons. The chain is Transcription antitermination protein NusB from Hamiltonella defensa subsp. Acyrthosiphon pisum (strain 5AT).